We begin with the raw amino-acid sequence, 475 residues long: Ataxin-10 (475 aa).

Arg-10 bears the Omega-N-methylarginine mark. 2 positions are modified to phosphoserine: Ser-12 and Ser-77. Thr-82 is modified (phosphothreonine). At Ser-430 the chain carries Phosphoserine.

It belongs to the ataxin-10 family. In terms of assembly, homooligomer. Interacts with GNB2. Interacts with IQCB1. Interacts with OGT. In terms of processing, polyubiquitinated. Phosphorylation at Ser-12 by AURKB promotes the association of ATXN10 with PLK1. Phosphorylation at Ser-77 and Thr-82 by PLK1 may play a role in the regulation of cytokinesis and may stimulate the proteasome-mediated degradation of ATXN10.

It localises to the cytoplasm. It is found in the perinuclear region. The protein localises to the cytoskeleton. The protein resides in the cilium basal body. Its subcellular location is the microtubule organizing center. It localises to the centrosome. It is found in the centriole. The protein localises to the midbody. May play a role in the regulation of cytokinesis. May play a role in signaling by stimulating protein glycosylation. Induces neuritogenesis by activating the Ras-MAP kinase pathway and is necessary for the survival of cerebellar neurons. Does not appear to play a major role in ciliogenesis. This chain is Ataxin-10 (ATXN10), found in Bos taurus (Bovine).